Reading from the N-terminus, the 534-residue chain is Chaperonin GroEL (534 aa).

ATP-binding positions include 29–32 (TAGP), 86–90 (DGTTT), Gly-413, and Asp-494.

It belongs to the chaperonin (HSP60) family. Forms a cylinder of 14 subunits composed of two heptameric rings stacked back-to-back. Interacts with the co-chaperonin GroES.

The protein resides in the cytoplasm. It carries out the reaction ATP + H2O + a folded polypeptide = ADP + phosphate + an unfolded polypeptide.. Functionally, together with its co-chaperonin GroES, plays an essential role in assisting protein folding. The GroEL-GroES system forms a nano-cage that allows encapsulation of the non-native substrate proteins and provides a physical environment optimized to promote and accelerate protein folding. The polypeptide is Chaperonin GroEL (Mycoplasmoides gallisepticum (strain R(low / passage 15 / clone 2)) (Mycoplasma gallisepticum)).